The sequence spans 355 residues: NADH-quinone oxidoreductase subunit H (355 aa).

A run of 8 helical transmembrane segments spans residues 25 to 45 (IVRI…LILW), 91 to 111 (WLYL…WAVI), 126 to 146 (LLYA…AGWA), 170 to 190 (MGFA…SEIV), 205 to 225 (FLSW…VSGI), 253 to 273 (MAFA…SALA), 290 to 310 (FIPG…VFIW), and 330 to 350 (VFLP…MSPL).

Belongs to the complex I subunit 1 family. NDH-1 is composed of 14 different subunits. Subunits NuoA, H, J, K, L, M, N constitute the membrane sector of the complex.

It localises to the cell inner membrane. It catalyses the reaction a quinone + NADH + 5 H(+)(in) = a quinol + NAD(+) + 4 H(+)(out). In terms of biological role, NDH-1 shuttles electrons from NADH, via FMN and iron-sulfur (Fe-S) centers, to quinones in the respiratory chain. The immediate electron acceptor for the enzyme in this species is believed to be ubiquinone. Couples the redox reaction to proton translocation (for every two electrons transferred, four hydrogen ions are translocated across the cytoplasmic membrane), and thus conserves the redox energy in a proton gradient. This subunit may bind ubiquinone. This chain is NADH-quinone oxidoreductase subunit H, found in Burkholderia ambifaria (strain MC40-6).